Consider the following 166-residue polypeptide: Arginine repressor (166 aa).

It belongs to the ArgR family.

It localises to the cytoplasm. Its pathway is amino-acid biosynthesis; L-arginine biosynthesis [regulation]. In terms of biological role, regulates arginine biosynthesis genes. The sequence is that of Arginine repressor from Mycobacterium ulcerans (strain Agy99).